Consider the following 528-residue polypeptide: Chromosomal replication initiator protein DnaA (528 aa).

Positions 1-104 (MNDDPNALAR…PVDDEPESDP (104 aa)) are domain I, interacts with DnaA modulators. The segment at 95 to 158 (PVDDEPESDP…TDFEEVDDDR (64 aa)) is disordered. The segment covering 104–123 (PPSRDHRPEPEPLHTPRHLE) has biased composition (basic and acidic residues). A domain II region spans residues 105–187 (PSRDHRPEPE…GPAPSATGGN (83 aa)). Acidic residues predominate over residues 149-158 (TDFEEVDDDR). The tract at residues 188–404 (SLNAKYTFDT…GALIRVTAFA (217 aa)) is domain III, AAA+ region. Residues glycine 232, glycine 234, lysine 235, and threonine 236 each contribute to the ATP site. The domain IV, binds dsDNA stretch occupies residues 405–528 (SLNRQPLDLT…TARIKQRSKR (124 aa)).

Belongs to the DnaA family. In terms of assembly, oligomerizes as a right-handed, spiral filament on DNA at oriC.

The protein resides in the cytoplasm. Functionally, plays an essential role in the initiation and regulation of chromosomal replication. ATP-DnaA binds to the origin of replication (oriC) to initiate formation of the DNA replication initiation complex once per cell cycle. Binds the DnaA box (a 9 base pair repeat at the origin) and separates the double-stranded (ds)DNA. Forms a right-handed helical filament on oriC DNA; dsDNA binds to the exterior of the filament while single-stranded (ss)DNA is stabiized in the filament's interior. The ATP-DnaA-oriC complex binds and stabilizes one strand of the AT-rich DNA unwinding element (DUE), permitting loading of DNA polymerase. After initiation quickly degrades to an ADP-DnaA complex that is not apt for DNA replication. Binds acidic phospholipids. The chain is Chromosomal replication initiator protein DnaA from Rhodococcus jostii (strain RHA1).